Consider the following 570-residue polypeptide: Glycine--tRNA ligase (570 aa).

Substrate is bound by residues Arg99 and Glu165. ATP-binding positions include 197 to 199 (RNE), 207 to 212 (LRLREF), 324 to 325 (EC), and 443 to 446 (GIDR). 212-216 (FSQAE) is a substrate binding site. 439-443 (EPSFG) lines the substrate pocket.

Belongs to the class-II aminoacyl-tRNA synthetase family.

It is found in the cytoplasm. It catalyses the reaction tRNA(Gly) + glycine + ATP = glycyl-tRNA(Gly) + AMP + diphosphate. In terms of biological role, catalyzes the attachment of glycine to tRNA(Gly). The sequence is that of Glycine--tRNA ligase from Thermococcus sibiricus (strain DSM 12597 / MM 739).